The primary structure comprises 557 residues: Probable protein kinase UbiB (557 aa).

In terms of domain architecture, Protein kinase spans 121 to 509 (SFDTVPLASA…RKLQTRVVTA (389 aa)). ATP contacts are provided by residues 127-135 (LASASIAQV) and Lys154. Asp289 functions as the Proton acceptor in the catalytic mechanism. 2 helical membrane passes run 506 to 526 (VVTA…YGLH) and 535 to 555 (VPVW…VAWL).

The protein belongs to the ABC1 family. UbiB subfamily.

Its subcellular location is the cell inner membrane. Its pathway is cofactor biosynthesis; ubiquinone biosynthesis [regulation]. Functionally, is probably a protein kinase regulator of UbiI activity which is involved in aerobic coenzyme Q (ubiquinone) biosynthesis. The protein is Probable protein kinase UbiB of Xanthomonas euvesicatoria pv. vesicatoria (strain 85-10) (Xanthomonas campestris pv. vesicatoria).